We begin with the raw amino-acid sequence, 747 residues long: AMP deaminase 1 (747 aa).

Phosphothreonine is present on threonine 81. Serine 85 is modified (phosphoserine). A Phosphotyrosine modification is found at tyrosine 216. Histidine 303 and histidine 305 together coordinate Zn(2+). Substrate-binding positions include histidine 305 and 374–379 (KFNDKY). At serine 441 the chain carries Phosphoserine. A Zn(2+)-binding site is contributed by histidine 572. Substrate is bound at residue glutamate 575. The active-site Proton acceptor is histidine 594. Aspartate 649 provides a ligand contact to Zn(2+). Residue 650–653 (DPMQ) coordinates substrate.

The protein belongs to the metallo-dependent hydrolases superfamily. Adenosine and AMP deaminases family. As to quaternary structure, homotetramer. Zn(2+) serves as cofactor.

It catalyses the reaction AMP + H2O + H(+) = IMP + NH4(+). The protein operates within purine metabolism; IMP biosynthesis via salvage pathway; IMP from AMP: step 1/1. AMP deaminase plays a critical role in energy metabolism. This chain is AMP deaminase 1, found in Homo sapiens (Human).